Here is a 259-residue protein sequence, read N- to C-terminus: MMQKQNMIVVNQKEIAKNIYELVLQGTLVQQMNEPGQFVHIKVAEGIAPLLRRPISICNVDQEKNEFTMLYRAEGQGTKTLATRKQGEMVDVLGPLGHGFPVEEAEAGQTALLVGGGIGVPPLYELSQRLVAKGVRVIHILGFQTKDVVFYEEKFAELGDAYVATVDGTHGTKGFVTDVIDHYGIDFDILYSCGPLAMLRALEGRYKEKKAYISLEERMGCGIGACFACVCHLQEDPSGHSYKKVCSDGPVFPIGEVVL.

Residues M2–V102 form the FAD-binding FR-type domain. FAD contacts are provided by residues R53–S56, L70–R72, and G77–T78. 4 residues coordinate [2Fe-2S] cluster: C221, C226, C229, and C246.

Belongs to the PyrK family. As to quaternary structure, heterotetramer of 2 PyrK and 2 PyrD type B subunits. [2Fe-2S] cluster serves as cofactor. Requires FAD as cofactor.

The protein operates within pyrimidine metabolism; UMP biosynthesis via de novo pathway; orotate from (S)-dihydroorotate (NAD(+) route): step 1/1. In terms of biological role, responsible for channeling the electrons from the oxidation of dihydroorotate from the FMN redox center in the PyrD type B subunit to the ultimate electron acceptor NAD(+). This Bacillus cereus (strain 03BB102) protein is Dihydroorotate dehydrogenase B (NAD(+)), electron transfer subunit.